Here is a 309-residue protein sequence, read N- to C-terminus: MAAEKRVFLDISVDENLIGRIEIRLFVEDAPKTCENFRALCTGEVGMTPNNKARLHYKQNEFHRIVKKFMIQGGDITEGDGRGGFSIYGRYFDDEKFKLKHSRPYLLSMANKGPNSNSSQFFITTAAAPHCNGKHVVFGEVVKGQNVVDYIDNLAVDDKSKPLAKVLISNCGELVKKKKPLKTDEELAAALEEKNNNARDNEIPKCPKSWLYRDDDNEKKHEMRNDKRREYRSRRSRSRSHEKNRDYKKENRGDSSRSQPRRDENGITVRGRGGVRFRRERSATPEHWRRNAPTKWVHDSHKHPEEDLV.

In terms of domain architecture, PPIase cyclophilin-type spans 8–173 (FLDISVDENL…AKVLISNCGE (166 aa)). Basic and acidic residues-rich tracts occupy residues 217 to 229 (NEKK…DKRR), 239 to 265 (RSHE…RDEN), 280 to 289 (ERSATPEHWR), and 296 to 309 (WVHD…EDLV). Residues 217–309 (NEKKHEMRND…SHKHPEEDLV (93 aa)) are disordered.

This sequence belongs to the cyclophilin-type PPIase family. Co-expressed with pdi-1 in the syncytial hypodermis.

The catalysed reaction is [protein]-peptidylproline (omega=180) = [protein]-peptidylproline (omega=0). Functionally, PPIases accelerate the folding of proteins. It catalyzes the cis-trans isomerization of proline imidic peptide bonds in oligopeptides. Thought to function as a catalyst in the folding and modification of cuticle collagens. The sequence is that of Peptidyl-prolyl cis-trans isomerase 9 (cyn-9) from Caenorhabditis elegans.